The following is a 3620-amino-acid chain: Cubilin (3620 aa).

Positions 1 to 20 are cleaved as a signal peptide; that stretch reads MSSPFLWSLIILLTFAESNG. A propeptide spans 21–32 (removed in mature form); the sequence is EAGGFELQRQKR. The interaction with AMN stretch occupies residues 39 to 46; the sequence is PRMATERG. A glycan (N-linked (GlcNAc...) asparagine) is linked at Asn102. The EGF-like 1 domain maps to 129–165; sequence DKKVCSSNPCQNGGTCLNLHDSFFCICPSQWKGPLCS. Intrachain disulfides connect Cys133–Cys144, Cys138–Cys153, Cys155–Cys164, Cys171–Cys187, Cys181–Cys196, and Cys198–Cys207. The EGF-like 2; calcium-binding domain occupies 167–208; that stretch reads DVNECQIYSGTPLGCQNGATCENTAGSYSCLCSPETHGPQCA. A glycan (N-linked (GlcNAc...) asparagine) is linked at Asn253. The EGF-like 3; calcium-binding domain maps to 260-301; the sequence is DIDECNLQHAPCSPLVQCFNTQGSFYCGACPTGWQGNGYSCQ. 19 cysteine pairs are disulfide-bonded: Cys264–Cys277, Cys271–Cys286, Cys289–Cys300, Cys306–Cys321, Cys313–Cys330, Cys333–Cys344, Cys350–Cys363, Cys357–Cys373, Cys396–Cys406, Cys401–Cys415, Cys417–Cys426, Cys433–Cys444, Cys438–Cys453, Cys455–Cys464, Cys471–Cys497, Cys524–Cys546, Cys587–Cys613, Cys640–Cys662, and Cys705–Cys730. An EGF-like 4; calcium-binding domain is found at 302 to 345; sequence DIDECKINNGGCSVVPPVMCVNTLGSYHCQACPPGYQGDGRVCT. 2 EGF-like domains span residues 346 to 382 and 392 to 427; these read VIDI…YTGN and LSDT…INCT. A glycan (N-linked (GlcNAc...) asparagine) is linked at Asn425. In terms of domain architecture, EGF-like 7; calcium-binding spans 429-465; the sequence is NINECLSNPCFNGGTCVDGVNAFSCECTRFWTGFLCQ. 13 CUB domains span residues 471–583, 587–699, 705–812, 813–924, 928–1038, 1044–1158, 1162–1274, 1275–1386, 1388–1503, 1507–1616, 1617–1731, 1735–1847, and 1849–1960; these read CGGS…WETQ, CGGI…YLTS, CGGN…YQVA, CGGE…FSAA, CGEI…YEAT, CMED…WDGS, CGGN…YQQT, CRNV…WFIH, CGGE…WQAV, CGGI…FNQV, CGGH…YAAS, CGGT…FTKI, and GNDN…WFAV. N-linked (GlcNAc...) asparagine glycans are attached at residues Asn708 and Asn745. A disulfide bridge links Cys757 with Cys775. Asn777 is a glycosylation site (N-linked (GlcNAc...) asparagine). A disulfide bridge links Cys813 with Cys838. The N-linked (GlcNAc...) asparagine glycan is linked to Asn853. 2 disulfides stabilise this stretch: Cys865–Cys887 and Cys928–Cys954. Asn953 carries an N-linked (GlcNAc...) asparagine glycan. Position 976 (Glu976) interacts with Ca(2+). Asn980 carries N-linked (GlcNAc...) asparagine glycosylation. An intrachain disulfide couples Cys981 to Cys1001. Ca(2+)-binding residues include Asp984, Asp1023, Asp1025, and Leu1026. Cys1044 and Cys1070 form a disulfide bridge. Ca(2+)-binding residues include Glu1092, Asp1102, and Asp1143. Cys1099 and Cys1121 are disulfide-bonded. Cysteines 1162 and 1188 form a disulfide. Asn1165 carries an N-linked (GlcNAc...) asparagine glycan. Glu1210 serves as a coordination point for Ca(2+). Asn1214 is a glycosylation site (N-linked (GlcNAc...) asparagine). Cysteines 1215 and 1237 form a disulfide. 3 residues coordinate Ca(2+): Asp1218, Asp1259, and Gln1262. A disulfide bridge connects residues Cys1275 and Cys1303. N-linked (GlcNAc...) asparagine glycans are attached at residues Asn1304 and Asn1316. Glu1325 is a binding site for Ca(2+). N-linked (GlcNAc...) asparagine glycosylation is present at Asn1329. An intrachain disulfide couples Cys1330 to Cys1348. Ca(2+) contacts are provided by Asp1333, Asp1370, and Val1372. Intrachain disulfides connect Cys1388/Cys1414 and Cys1441/Cys1463. Residue Asn1497 is glycosylated (N-linked (GlcNAc...) asparagine). A disulfide bond links Cys1507 and Cys1533. Asn1548 carries N-linked (GlcNAc...) asparagine glycosylation. 5 cysteine pairs are disulfide-bonded: Cys1560–Cys1578, Cys1617–Cys1644, Cys1672–Cys1694, Cys1735–Cys1761, and Cys1788–Cys1809. N-linked (GlcNAc...) asparagine glycosylation occurs at Asn1643. 3 N-linked (GlcNAc...) asparagine glycosylation sites follow: Asn1799, Asn1816, and Asn1882. Cys1902 and Cys1924 are disulfide-bonded. Asn1961 carries an N-linked (GlcNAc...) asparagine glycan. Intrachain disulfides connect Cys1975/Cys2003 and Cys2029/Cys2051. CUB domains are found at residues 1975–2088, 2089–2210, 2214–2331, 2333–2445, 2449–2562, 2567–2684, 2686–2798, 2802–2916, 2917–3032, 3034–3147, 3154–3271, 3275–3392, 3392–3504, and 3508–3620; these read CGGF…FHKS, CGGY…YEAK, CGGN…YAIA, CGGR…FESS, CGGE…YTSS, CGGS…YSFT, CGGI…WNTQ, CGGI…FVSR, CGGN…YKIT, CGGV…FQQT, CGGY…YTTV, CGGT…IAGC, CNRE…WTSS, and CGGT…TWDS. Residues Asn2082 and Asn2114 are each glycosylated (N-linked (GlcNAc...) asparagine). Intrachain disulfides connect Cys2089–Cys2115, Cys2214–Cys2244, and Cys2272–Cys2294. A glycan (N-linked (GlcNAc...) asparagine) is linked at Asn2317. Cysteines 2333 and 2360 form a disulfide. Asn2383 and Asn2397 each carry an N-linked (GlcNAc...) asparagine glycan. 3 disulfide bridges follow: Cys2387-Cys2408, Cys2449-Cys2475, and Cys2502-Cys2524. N-linked (GlcNAc...) asparagine glycans are attached at residues Asn2528, Asn2578, Asn2589, and Asn2607. Cysteines 2567 and 2596 form a disulfide. Intrachain disulfides connect Cys2625-Cys2646, Cys2686-Cys2712, Cys2739-Cys2761, Cys2802-Cys2828, Cys2857-Cys2880, Cys2917-Cys2943, and Cys2974-Cys2996. Residue Asn2810 is glycosylated (N-linked (GlcNAc...) asparagine). Residues Asn2920, Asn2942, and Asn2986 are each glycosylated (N-linked (GlcNAc...) asparagine). A Phosphothreonine modification is found at Thr3005. Cystine bridges form between Cys3034/Cys3061 and Cys3088/Cys3110. Asn3039, Asn3100, and Asn3122 each carry an N-linked (GlcNAc...) asparagine glycan. 2 cysteine pairs are disulfide-bonded: Cys3154–Cys3182 and Cys3212–Cys3234. N-linked (GlcNAc...) asparagine glycosylation is found at Asn3265, Asn3280, and Asn3292. 2 disulfide bridges follow: Cys3275/Cys3303 and Cys3329/Cys3351. An N-linked (GlcNAc...) asparagine glycan is attached at Asn3354. Cysteines 3392 and 3418 form a disulfide. N-linked (GlcNAc...) asparagine glycosylation is found at Asn3427, Asn3454, and Asn3530. Disulfide bonds link Cys3445–Cys3467, Cys3508–Cys3534, and Cys3561–Cys3583.

Interacts with AMN. Component of the cubam complex composed of one CUBN trimer and one AMN chain. The cubam complex can dimerize. Interacts with LRP2 in a dual-receptor complex in a calcium-dependent manner. Found in a complex with PID1/PCLI1, LRP1 and CUBNI. Interacts with LRP1 and PID1/PCLI1. In terms of processing, the precursor is cleaved by a trans-Golgi proteinase furin, removing a propeptide. N-glycosylated. As to expression, detected in kidney cortex (at protein level). Detected in kidney, duodenum and jejunum.

It localises to the apical cell membrane. The protein resides in the cell membrane. It is found in the membrane. Its subcellular location is the coated pit. The protein localises to the endosome. It localises to the lysosome membrane. In terms of biological role, endocytic receptor which plays a role in lipoprotein, vitamin and iron metabolism by facilitating their uptake. Acts together with LRP2 to mediate endocytosis of high-density lipoproteins, GC, hemoglobin, ALB, TF and SCGB1A1. Acts together with AMN to mediate endocytosis of the CBLIF-cobalamin complex. Binds to ALB, MB, Kappa and lambda-light chains, TF, hemoglobin, GC, SCGB1A1, APOA1, high density lipoprotein, and the CBLIF-cobalamin complex. Ligand binding requires calcium. Serves as important transporter in several absorptive epithelia, including intestine, renal proximal tubules and embryonic yolk sac. May play an important role in the development of the peri-implantation embryo through internalization of APOA1 and cholesterol. Binds to LGALS3 at the maternal-fetal interface. The polypeptide is Cubilin (CUBN) (Canis lupus familiaris (Dog)).